The chain runs to 550 residues: Leucine-rich repeat, immunoglobulin-like domain and transmembrane domain-containing protein 2 (550 aa).

A signal peptide spans 1–19; it reads MASVFHYFLLVLVFLDTHA. The 32-residue stretch at 23–54 folds into the LRRNT domain; sequence FCLPGCTCSEESFGRTLQCTSVSLGKIPGNLS. N52 is a glycosylation site (N-linked (GlcNAc...) asparagine). 4 LRR repeats span residues 80 to 103, 104 to 125, 128 to 149, and 152 to 173; these read TLEYLWLNFNNISVIHLGALEHLP, ELRELRLEGNKLCSVPWTAFRA, LLRVLDLKRNKIDALPELALQF, and SLTYLDLSSNRLTVVSKSVFLN. Positions 200 to 252 constitute an LRRCT domain; sequence NPWVCDCRLRGLVQFVKSITLPVILVNSYLICQGPLSKAGQLFHETELSACMK. Residues 253 to 341 enclose the Ig-like domain; the sequence is PQISTPSANI…SIGKSNLVIS (89 aa). Residues C274 and C327 are joined by a disulfide bond. In terms of domain architecture, Fibronectin type-III spans 361–451; it reads EGNAYIDLRV…QGQCVAFVTG (91 aa). Residues 466 to 486 form a helical membrane-spanning segment; sequence VTVVLCVVLLAVPVGAYAWAA. The tract at residues 508-550 is disordered; it reads SCTPAAPQSKDGSFREHPAVCDDGEGHIDTEGDKEKGGTEDNS. Basic and acidic residues predominate over residues 519 to 550; sequence GSFREHPAVCDDGEGHIDTEGDKEKGGTEDNS.

As to quaternary structure, interacts with LRIT1; may form a heterodimer with LRIT1.

The protein resides in the membrane. This Homo sapiens (Human) protein is Leucine-rich repeat, immunoglobulin-like domain and transmembrane domain-containing protein 2 (LRIT2).